Consider the following 297-residue polypeptide: Heterogeneous nuclear ribonucleoprotein D-like (297 aa).

Residues 1 to 21 are disordered; sequence MTGFGATPDFNEGSKINASKN. RRM domains lie at 26 to 108 and 111 to 190; these read GKMF…KGKE and KKVF…QPKE. The tract at residues 192–224 is disordered; that stretch reads YRQQQQKQQKGGRGAATGRGGARGRGRGQGWNQ. Over residues 202-222 the composition is skewed to gly residues; that stretch reads GGRGAATGRGGARGRGRGQGW.

The protein localises to the nucleus. The protein resides in the cytoplasm. Its function is as follows. Acts as a transcriptional regulator. Binds DNA and RNA. This Xenopus tropicalis (Western clawed frog) protein is Heterogeneous nuclear ribonucleoprotein D-like (hnrnpdl).